We begin with the raw amino-acid sequence, 206 residues long: Ribosomal RNA large subunit methyltransferase E (206 aa).

Glycine 63, tryptophan 65, aspartate 83, aspartate 99, and aspartate 124 together coordinate S-adenosyl-L-methionine. The Proton acceptor role is filled by lysine 164.

The protein belongs to the class I-like SAM-binding methyltransferase superfamily. RNA methyltransferase RlmE family.

It is found in the cytoplasm. It carries out the reaction uridine(2552) in 23S rRNA + S-adenosyl-L-methionine = 2'-O-methyluridine(2552) in 23S rRNA + S-adenosyl-L-homocysteine + H(+). Functionally, specifically methylates the uridine in position 2552 of 23S rRNA at the 2'-O position of the ribose in the fully assembled 50S ribosomal subunit. The polypeptide is Ribosomal RNA large subunit methyltransferase E (Buchnera aphidicola subsp. Acyrthosiphon pisum (strain APS) (Acyrthosiphon pisum symbiotic bacterium)).